The chain runs to 865 residues: Protein translocase subunit SecA (865 aa).

ATP is bound by residues Gln93, 111-115 (GEGKT), and Asp501. Zn(2+)-binding residues include Cys841, Cys843, Cys852, and Cys853.

The protein belongs to the SecA family. In terms of assembly, monomer and homodimer. Part of the essential Sec protein translocation apparatus which comprises SecA, SecYEG and auxiliary proteins SecDF-YajC and YidC. Zn(2+) serves as cofactor.

It localises to the cell inner membrane. The protein localises to the cytoplasm. It catalyses the reaction ATP + H2O + cellular proteinSide 1 = ADP + phosphate + cellular proteinSide 2.. Functionally, part of the Sec protein translocase complex. Interacts with the SecYEG preprotein conducting channel. Has a central role in coupling the hydrolysis of ATP to the transfer of proteins into and across the cell membrane, serving as an ATP-driven molecular motor driving the stepwise translocation of polypeptide chains across the membrane. The protein is Protein translocase subunit SecA of Helicobacter pylori (strain ATCC 700392 / 26695) (Campylobacter pylori).